The sequence spans 95 residues: UPF0213 protein PEPE_0875 (95 aa).

The region spanning 7-82 is the GIY-YIG domain; that stretch reads NGFYFYVLRC…KQRTRSSKIK (76 aa).

It belongs to the UPF0213 family.

This chain is UPF0213 protein PEPE_0875, found in Pediococcus pentosaceus (strain ATCC 25745 / CCUG 21536 / LMG 10740 / 183-1w).